The chain runs to 124 residues: Glycine cleavage system H protein (124 aa).

The Lipoyl-binding domain maps to 22–104 (LVITGITDHA…YGKGWIYKIK (83 aa)). Lys63 is subject to N6-lipoyllysine.

It belongs to the GcvH family. As to quaternary structure, the glycine cleavage system is composed of four proteins: P, T, L and H. (R)-lipoate serves as cofactor.

The glycine cleavage system catalyzes the degradation of glycine. The H protein shuttles the methylamine group of glycine from the P protein to the T protein. The protein is Glycine cleavage system H protein of Acinetobacter baumannii (strain SDF).